The following is a 163-amino-acid chain: MRCPKCQSLKSSVIDSRQAEDGNTIRRRRSCDQCGQRFTTYERIEEKTLVVVKKDGTREQFSREKIFNGIIRSAQKRPVSTDDIDEVVNRIEQKVRAQGDSEIESDVIGNLVMEELVELDEITYVRFASVYRSFKDVGELENLLKQMISKGSKVKPGKKDETK.

A disordered region spans residues 1-22 (MRCPKCQSLKSSVIDSRQAEDG). A zinc finger spans residues 3–34 (CPKCQSLKSSVIDSRQAEDGNTIRRRRSCDQC). Residues 49 to 139 (LVVVKKDGTR…VYRSFKDVGE (91 aa)) enclose the ATP-cone domain.

It belongs to the NrdR family. It depends on Zn(2+) as a cofactor.

Its function is as follows. Negatively regulates transcription of bacterial ribonucleotide reductase nrd genes and operons by binding to NrdR-boxes. In Streptococcus suis (strain 98HAH33), this protein is Transcriptional repressor NrdR.